A 218-amino-acid chain; its full sequence is Small ribosomal subunit protein uS3 (218 aa).

The 69-residue stretch at 38 to 106 (IREFISKRLS…RVHINILEIK (69 aa)) folds into the KH type-2 domain.

It belongs to the universal ribosomal protein uS3 family. As to quaternary structure, part of the 30S ribosomal subunit. Forms a tight complex with proteins S10 and S14.

Binds the lower part of the 30S subunit head. Binds mRNA in the 70S ribosome, positioning it for translation. The polypeptide is Small ribosomal subunit protein uS3 (Bacillus velezensis (strain DSM 23117 / BGSC 10A6 / LMG 26770 / FZB42) (Bacillus amyloliquefaciens subsp. plantarum)).